Consider the following 136-residue polypeptide: MQTAGALFISPALIRCCTRGLIRPVSASFLNSPVNSSKQPSYSNFPLQVARREFQTSVVSRDIDTAAKFIGAGAATVGVAGSGAGIGTVFGSLIIGYARNPSLKQQLFSYAILGFALSEAMGLFCLMVAFLILFAM.

The N-terminal 61 residues, 1–61, are a transit peptide targeting the mitochondrion; sequence MQTAGALFIS…REFQTSVVSR (61 aa). The chain crosses the membrane as a helical span at residues 77-97; that stretch reads VGVAGSGAGIGTVFGSLIIGY. K104 bears the N6,N6,N6-trimethyllysine mark. Residues 112–132 form a helical membrane-spanning segment; sequence ILGFALSEAMGLFCLMVAFLI.

This sequence belongs to the ATPase C chain family. As to quaternary structure, homooctamer; the c-ring consists of eight c subunits forming a circle, and each subunit adopts a hairpin shape. Component of the ATP synthase complex composed at least of ATP5F1A/subunit alpha, ATP5F1B/subunit beta, ATP5MC1/subunit c (homooctomer), MT-ATP6/subunit a, MT-ATP8/subunit 8, ATP5ME/subunit e, ATP5MF/subunit f, ATP5MG/subunit g, ATP5MK/subunit k, ATP5MJ/subunit j, ATP5F1C/subunit gamma, ATP5F1D/subunit delta, ATP5F1E/subunit epsilon, ATP5PF/subunit F6, ATP5PB/subunit b, ATP5PD/subunit d, ATP5PO/subunit OSCP. ATP synthase complex consists of a soluble F(1) head domain (subunits alpha(3) and beta(3)) - the catalytic core - and a membrane F(0) domain - the membrane proton channel (subunits c, a, 8, e, f, g, k and j). These two domains are linked by a central stalk (subunits gamma, delta, and epsilon) rotating inside the F1 region and a stationary peripheral stalk (subunits F6, b, d, and OSCP). Interacts with TMEM70 (homooligomer form); this interaction facilitates the oligomer formation of subunit c/ATP5MC1 (c-ring) and the c-ring membrane insertion and also protects ATP5MC1 against intramitochondrial proteolysis. Post-translationally, trimethylated by ATPSCKMT at Lys-104. Methylation is required for proper incorporation of the C subunit into the ATP synthase complex and mitochondrial respiration.

Its subcellular location is the mitochondrion membrane. The enzyme catalyses H(+)(in) = H(+)(out). Subunit c, of the mitochondrial membrane ATP synthase complex (F(1)F(0) ATP synthase or Complex V) that produces ATP from ADP in the presence of a proton gradient across the membrane which is generated by electron transport complexes of the respiratory chain. ATP synthase complex consist of a soluble F(1) head domain - the catalytic core - and a membrane F(1) domain - the membrane proton channel. These two domains are linked by a central stalk rotating inside the F(1) region and a stationary peripheral stalk. During catalysis, ATP synthesis in the catalytic domain of F(1) is coupled via a rotary mechanism of the central stalk subunits to proton translocation. With the subunit a (MT-ATP6), forms the proton-conducting channel in the F(0) domain, that contains two crucial half-channels (inlet and outlet) that facilitate proton movement from the mitochondrial intermembrane space (IMS) into the matrix. Protons are taken up via the inlet half-channel and released through the outlet half-channel, following a Grotthuss mechanism. This chain is ATP synthase F(0) complex subunit C1, mitochondrial, found in Homo sapiens (Human).